We begin with the raw amino-acid sequence, 40 residues long: Photosystem II reaction center protein J (40 aa).

Residues 8 to 28 form a helical membrane-spanning segment; sequence IPLWVVATIAGLGVITVVGIF.

Belongs to the PsbJ family. In terms of assembly, PSII is composed of 1 copy each of membrane proteins PsbA, PsbB, PsbC, PsbD, PsbE, PsbF, PsbH, PsbI, PsbJ, PsbK, PsbL, PsbM, PsbT, PsbX, PsbY, PsbZ, Psb30/Ycf12, peripheral proteins PsbO, CyanoQ (PsbQ), PsbU, PsbV and a large number of cofactors. It forms dimeric complexes.

It is found in the cellular thylakoid membrane. Functionally, one of the components of the core complex of photosystem II (PSII). PSII is a light-driven water:plastoquinone oxidoreductase that uses light energy to abstract electrons from H(2)O, generating O(2) and a proton gradient subsequently used for ATP formation. It consists of a core antenna complex that captures photons, and an electron transfer chain that converts photonic excitation into a charge separation. In Trichormus variabilis (strain ATCC 29413 / PCC 7937) (Anabaena variabilis), this protein is Photosystem II reaction center protein J.